Consider the following 92-residue polypeptide: Nodulation protein F (92 aa).

Residues 4-88 form the Carrier domain; the sequence is QLTLEIISAI…DVVEAVRGLL (85 aa). Serine 45 carries the O-(pantetheine 4'-phosphoryl)serine modification.

Post-translationally, 4'-phosphopantetheine is transferred from CoA to a specific serine of apo-NodF.

Proposed to synthesize nod factor fatty acyl chain. Involved in trans-2,trans-4,trans-6,cis-11-octadecatetraenoic acid biosynthesis. The polypeptide is Nodulation protein F (nodF) (Rhizobium leguminosarum bv. viciae).